Consider the following 247-residue polypeptide: DNA polymerase sliding clamp (247 aa).

The protein belongs to the PCNA family. As to quaternary structure, homotrimer. The subunits circularize to form a toroid; DNA passes through its center. Replication factor C (RFC) is required to load the toroid on the DNA.

In terms of biological role, sliding clamp subunit that acts as a moving platform for DNA processing. Responsible for tethering the catalytic subunit of DNA polymerase and other proteins to DNA during high-speed replication. The protein is DNA polymerase sliding clamp of Methanospirillum hungatei JF-1 (strain ATCC 27890 / DSM 864 / NBRC 100397 / JF-1).